The chain runs to 1151 residues: Nardilysin (1151 aa).

A signal peptide spans 1–20 (MLRRVTVAAVCATRRKLCEA). Disordered stretches follow at residues 53 to 108 (RNKA…KSPS) and 133 to 207 (MEGK…KKTT). Phosphoserine is present on residues Ser86, Ser94, and Ser96. Over residues 141–198 (TDDEEEEEVEEEEEDDDEDSGAEIEDDDEEGFDDEDEFDDEHDDDLDTEDNELEELEE) the composition is skewed to acidic residues. His233 contributes to the Zn(2+) binding site. Glu236 acts as the Proton acceptor in catalysis. His237 and Glu314 together coordinate Zn(2+).

This sequence belongs to the peptidase M16 family. In terms of assembly, interacts with BACE1 and NRG1. Requires Zn(2+) as cofactor. Primarily in adult heart, skeletal muscle, and testis and at much lower levels in other tissues.

It localises to the mitochondrion. It is found in the cell projection. The protein resides in the dendrite. It carries out the reaction Hydrolysis of polypeptides, preferably at -Xaa-|-Arg-Lys-, and less commonly at -Arg-|-Arg-Xaa-, in which Xaa is not Arg or Lys.. Functionally, cleaves peptide substrates on the N-terminus of arginine residues in dibasic pairs. Is a critical activator of BACE1- and ADAM17-mediated pro-neuregulin ectodomain shedding, involved in the positive regulation of axonal maturation and myelination. Required for proper functioning of 2-oxoglutarate dehydrogenase (OGDH). The sequence is that of Nardilysin from Homo sapiens (Human).